A 281-amino-acid polypeptide reads, in one-letter code: Radiation response metalloprotease IrrE (281 aa).

His82 lines the Zn(2+) pocket. Glu83 is a catalytic residue. Residues His86 and Glu113 each coordinate Zn(2+). Residues 262–281 (LPAGRSEPDADKPEAPGDQS) form a disordered region. The span at 267–281 (SEPDADKPEAPGDQS) shows a compositional bias: basic and acidic residues.

As to quaternary structure, interacts with DdrOC.

Protease activity is inhibited by EDTA. In terms of biological role, plays a central regulatory role in DNA repair and protection pathways in response to radiation stress. Acts as a site-specific metalloprotease that cleaves and inactivates the repressor proteins DdrOC and DdrOP3, resulting in induced expression of genes required for DNA repair and cell survival after exposure to radiation. In Deinococcus deserti (strain DSM 17065 / CIP 109153 / LMG 22923 / VCD115), this protein is Radiation response metalloprotease IrrE.